A 198-amino-acid chain; its full sequence is Probable GTP-binding protein EngB (198 aa).

The EngB-type G domain maps to 22-197; sequence TLPEYAFIGR…LDYIEGINNS (176 aa). GTP-binding positions include 30 to 37, 57 to 61, 75 to 78, 142 to 145, and 175 to 178; these read GRSNVGKS, GKTQL, DLPG, TKAD, and ITSA. Positions 37 and 59 each coordinate Mg(2+).

This sequence belongs to the TRAFAC class TrmE-Era-EngA-EngB-Septin-like GTPase superfamily. EngB GTPase family. The cofactor is Mg(2+).

Its function is as follows. Necessary for normal cell division and for the maintenance of normal septation. This Christiangramia forsetii (strain DSM 17595 / CGMCC 1.15422 / KT0803) (Gramella forsetii) protein is Probable GTP-binding protein EngB.